Consider the following 205-residue polypeptide: Octanoyltransferase (205 aa).

The region spanning 30-205 (ERTADEIWLL…QALRARLGYA (176 aa)) is the BPL/LPL catalytic domain. Substrate is bound by residues 69-76 (RGGQVTYH), 136-138 (SLG), and 149-151 (GLA). The Acyl-thioester intermediate role is filled by C167.

It belongs to the LipB family.

Its subcellular location is the cytoplasm. It carries out the reaction octanoyl-[ACP] + L-lysyl-[protein] = N(6)-octanoyl-L-lysyl-[protein] + holo-[ACP] + H(+). The protein operates within protein modification; protein lipoylation via endogenous pathway; protein N(6)-(lipoyl)lysine from octanoyl-[acyl-carrier-protein]: step 1/2. Catalyzes the transfer of endogenously produced octanoic acid from octanoyl-acyl-carrier-protein onto the lipoyl domains of lipoate-dependent enzymes. Lipoyl-ACP can also act as a substrate although octanoyl-ACP is likely to be the physiological substrate. The sequence is that of Octanoyltransferase from Ectopseudomonas mendocina (strain ymp) (Pseudomonas mendocina).